Consider the following 582-residue polypeptide: V-type ATP synthase alpha chain (582 aa).

Position 231–238 (231–238 (GPFGSGKT)) interacts with ATP.

It belongs to the ATPase alpha/beta chains family.

It catalyses the reaction ATP + H2O + 4 H(+)(in) = ADP + phosphate + 5 H(+)(out). Functionally, produces ATP from ADP in the presence of a proton gradient across the membrane. The V-type alpha chain is a catalytic subunit. The polypeptide is V-type ATP synthase alpha chain (Deinococcus deserti (strain DSM 17065 / CIP 109153 / LMG 22923 / VCD115)).